We begin with the raw amino-acid sequence, 806 residues long: Acetyl-CoA decarbonylase/synthase complex subunit alpha 1 (806 aa).

[4Fe-4S] cluster-binding residues include C73, C76, C77, C79, C84, and C94. H117 contributes to the CO binding site. [Ni-4Fe-4S] cluster contacts are provided by H250, C278, and C323. 4Fe-4S ferredoxin-type domains are found at residues 406-436 (SDEQLKEWVDKCADCGACYLACPIELDIPEA) and 445-475 (FSYLEDLHDACIGCRRCEQVCKKEIPILSVI). 8 residues coordinate [4Fe-4S] cluster: C417, C420, C423, C427, C455, C458, C461, and C465. Residues C523, C552, and C587 each coordinate [Ni-4Fe-4S] cluster.

The protein belongs to the Ni-containing carbon monoxide dehydrogenase family. As to quaternary structure, heterotetramer of two alpha and two epsilon subunits. The ACDS complex is made up of alpha, epsilon, beta, gamma and delta subunits with a probable stoichiometry of (alpha(2)epsilon(2))(4)-beta(8)-(gamma(1)delta(1))(8). It depends on [4Fe-4S] cluster as a cofactor. The cofactor is [Ni-4Fe-4S] cluster.

The catalysed reaction is CO + 2 oxidized [2Fe-2S]-[ferredoxin] + H2O = 2 reduced [2Fe-2S]-[ferredoxin] + CO2 + 2 H(+). It functions in the pathway one-carbon metabolism; methanogenesis from acetate. In terms of biological role, part of the ACDS complex that catalyzes the reversible cleavage of acetyl-CoA, allowing growth on acetate as sole source of carbon and energy. The alpha-epsilon subcomponent functions as a carbon monoxide dehydrogenase. The polypeptide is Acetyl-CoA decarbonylase/synthase complex subunit alpha 1 (Methanosarcina mazei (strain ATCC BAA-159 / DSM 3647 / Goe1 / Go1 / JCM 11833 / OCM 88) (Methanosarcina frisia)).